Reading from the N-terminus, the 135-residue chain is Transcriptional regulator HosA (135 aa).

An HTH marR-type domain is found at 4 to 134 (RNKAFHQLRQ…FMQLVRKMMN (131 aa)). Positions 48 to 71 (QVALIEAAVSTKATLAEMLARMEN) form a DNA-binding region, H-T-H motif.

Functionally, involved in the temperature-dependent positive control of flagellum-driven swimming motility and cellular aggregation. Regulates fliC expression by directly interacting with fliC promoter. This Escherichia coli O111:H- protein is Transcriptional regulator HosA (hosA).